We begin with the raw amino-acid sequence, 658 residues long: NADPH-dependent diflavin oxidoreductase 1 (658 aa).

The 145-residue stretch at 16–160 (LTILYMTQTG…ELGPWMNRFW (145 aa)) folds into the Flavodoxin-like domain. FMN-binding positions include 22-27 (TQTGTS), 69-72 (STTG), 107-116 (LGDSTYPRFC), and D142. The FAD-binding FR-type domain maps to 215 to 502 (QGWSISILDK…IKPGYLTLPP (288 aa)). FAD contacts are provided by residues R400, 430-433 (REFS), and 474-477 (GLCT). NADP(+)-binding positions include T514, 574–575 (SR), and 580–584 (KTYVQ). Position 657 (W657) interacts with FAD.

It belongs to the NADPH-dependent diflavin oxidoreductase NDOR1 family. In the N-terminal section; belongs to the flavodoxin family. The protein in the C-terminal section; belongs to the flavoprotein pyridine nucleotide cytochrome reductase family. In terms of assembly, interacts with DRE2; as part of the cytosolic iron-sulfur (Fe-S) protein assembly (CIA) machinery. It depends on FAD as a cofactor. FMN is required as a cofactor.

It is found in the cytoplasm. Its subcellular location is the mitochondrion. The catalysed reaction is 2 oxidized [2Fe-2S]-[protein] + NADPH = 2 reduced [2Fe-2S]-[protein] + NADP(+) + H(+). Its function is as follows. NADPH-dependent reductase which is a central component of the cytosolic iron-sulfur (Fe-S) protein assembly (CIA) machinery. Transfers electrons from NADPH via its FAD and FMN prosthetic groups to the [2Fe-2S] cluster of DRE2, another key component of the CIA machinery. In turn, this reduced cluster provides electrons for assembly of cytosolic iron-sulfur cluster proteins. Positively controls H(2)O(2)-induced cell death. This chain is NADPH-dependent diflavin oxidoreductase 1, found in Mycosarcoma maydis (Corn smut fungus).